Reading from the N-terminus, the 1155-residue chain is Polarized growth protein rax2 (1155 aa).

An N-terminal signal peptide occupies residues 1-27 (MAIYSSFWIRLYFTFRFFCYFLTSVVA). The Extracellular portion of the chain corresponds to 28 to 1105 (SDVSFLGDFS…KYDHIGQPRY (1078 aa)). N-linked (GlcNAc...) asparagine glycosylation is found at N44, N61, N103, N118, N124, N156, N161, N182, N190, N213, N224, N306, N391, N413, N419, N510, N519, N554, N562, N607, N630, N713, N722, N743, N769, N793, N807, N824, N840, N848, N876, N893, N899, N916, N945, N1009, N1030, and N1055. Residues 1106–1126 (VVIISLGISIGVMFLIMSGSI) traverse the membrane as a helical segment. The Cytoplasmic portion of the chain corresponds to 1127–1155 (VVEIIHWFFSEHVETLHDYSNFLKELKTQ).

It belongs to the RAX2 family. In terms of assembly, interacts with for3 and tea1.

The protein localises to the cell membrane. Functionally, controls cell polarity, through the G1 phase of mitosis, via regulation of for3 localization. Required for actin cable formation where it directs the spatial distribution of the actin cables. The chain is Polarized growth protein rax2 from Schizosaccharomyces pombe (strain 972 / ATCC 24843) (Fission yeast).